We begin with the raw amino-acid sequence, 516 residues long: Delta(24)-sterol reductase (516 aa).

The first 22 residues, 1 to 22 (MEPAVSLAVCALLFLLWVRVKG), serve as a signal peptide directing secretion. At 23–31 (LEFVLIHQR) the chain is on the lumenal side. A helical transmembrane segment spans residues 32 to 52 (WVFVCLFLLPLSLIFDIYYYV). The Cytoplasmic segment spans residues 53 to 516 (RAWVVFKLSS…YDKICKAARH (464 aa)). The FAD-binding PCMH-type domain occupies 58–234 (FKLSSAPRLH…VAAEIRIIPA (177 aa)). 163 to 175 (TVGGLIMGTGIES) lines the FAD pocket.

The protein belongs to the FAD-binding oxidoreductase/transferase type 4 family. As to quaternary structure, interacts with DHCR7; this interaction regulates DHCR7 activity. FAD is required as a cofactor.

Its subcellular location is the endoplasmic reticulum membrane. The protein localises to the golgi apparatus membrane. It catalyses the reaction cholesterol + NADP(+) = desmosterol + NADPH + H(+). The catalysed reaction is lanosterol + NADPH + H(+) = 24,25-dihydrolanosterol + NADP(+). It carries out the reaction 5alpha-cholest-8-en-3beta-ol + NADP(+) = zymosterol + NADPH + H(+). Its pathway is steroid biosynthesis; cholesterol biosynthesis. In terms of biological role, catalyzes the reduction of the delta-24 double bond of sterol intermediates during cholesterol biosynthesis. In addition to its cholesterol-synthesizing activity, can protect cells from oxidative stress by reducing caspase 3 activity during apoptosis induced by oxidative stress. Also protects against amyloid-beta peptide-induced apoptosis. The chain is Delta(24)-sterol reductase (Dhcr24) from Rattus norvegicus (Rat).